The following is a 166-amino-acid chain: Lipoprotein signal peptidase (166 aa).

Transmembrane regions (helical) follow at residues 9–29 (ASGA…FDQL), 45–65 (ALTS…FGFL), 71–91 (WQRW…CYLL), and 99–119 (LFSL…IDRL). Residues D126 and D144 contribute to the active site. The chain crosses the membrane as a helical span at residues 135 to 155 (WHFPAFNLADSAITVGAVLLI).

Belongs to the peptidase A8 family.

It is found in the cell inner membrane. The catalysed reaction is Release of signal peptides from bacterial membrane prolipoproteins. Hydrolyzes -Xaa-Yaa-Zaa-|-(S,diacylglyceryl)Cys-, in which Xaa is hydrophobic (preferably Leu), and Yaa (Ala or Ser) and Zaa (Gly or Ala) have small, neutral side chains.. Its pathway is protein modification; lipoprotein biosynthesis (signal peptide cleavage). Functionally, this protein specifically catalyzes the removal of signal peptides from prolipoproteins. The protein is Lipoprotein signal peptidase of Burkholderia vietnamiensis (strain G4 / LMG 22486) (Burkholderia cepacia (strain R1808)).